Reading from the N-terminus, the 519-residue chain is Nif-specific regulatory protein (519 aa).

The region spanning 177 to 405 is the Sigma-54 factor interaction domain; sequence IVGESPALKR…LDNCVQRTAT (229 aa). ATP-binding positions include 205 to 212 and 268 to 277; these read GESGTGKE and ANGGTLLLDE. The inter-domain linker stretch occupies residues 406–476; that stretch reads LASSNTITSS…ATIEAAGLTE (71 aa). Positions 419 and 424 each coordinate a divalent metal cation. A C-terminal DNA-binding domain region spans residues 477-519; that stretch reads RDRLIKAMERAGWVQAKAARILGKTPRQVGYALRRHRIDVKKE. The H-T-H motif DNA-binding region spans 491–510; that stretch reads QAKAARILGKTPRQVGYALR.

In terms of assembly, interacts with sigma-54.

Its function is as follows. Required for activation of most nif operons, which are directly involved in nitrogen fixation. In Rhizobium leguminosarum, this protein is Nif-specific regulatory protein (nifA).